Consider the following 167-residue polypeptide: ATP synthase subunit b (167 aa).

A helical membrane pass occupies residues 8-28 (AEAEFWVGAGLLIFLGIVFFG).

Belongs to the ATPase B chain family. In terms of assembly, F-type ATPases have 2 components, F(1) - the catalytic core - and F(0) - the membrane proton channel. F(1) has five subunits: alpha(3), beta(3), gamma(1), delta(1), epsilon(1). F(0) has three main subunits: a(1), b(2) and c(10-14). The alpha and beta chains form an alternating ring which encloses part of the gamma chain. F(1) is attached to F(0) by a central stalk formed by the gamma and epsilon chains, while a peripheral stalk is formed by the delta and b chains.

The protein resides in the cell inner membrane. Its function is as follows. F(1)F(0) ATP synthase produces ATP from ADP in the presence of a proton or sodium gradient. F-type ATPases consist of two structural domains, F(1) containing the extramembraneous catalytic core and F(0) containing the membrane proton channel, linked together by a central stalk and a peripheral stalk. During catalysis, ATP synthesis in the catalytic domain of F(1) is coupled via a rotary mechanism of the central stalk subunits to proton translocation. Functionally, component of the F(0) channel, it forms part of the peripheral stalk, linking F(1) to F(0). This is ATP synthase subunit b from Phenylobacterium zucineum (strain HLK1).